The chain runs to 62 residues: Small ribosomal subunit protein bS21 (62 aa).

The disordered stretch occupies residues 38–62; sequence YEKPSERRKRKMNAAVRKNRRTRHG.

The protein belongs to the bacterial ribosomal protein bS21 family.

In Gemmatimonas aurantiaca (strain DSM 14586 / JCM 11422 / NBRC 100505 / T-27), this protein is Small ribosomal subunit protein bS21.